Consider the following 344-residue polypeptide: Glycerol-3-phosphate dehydrogenase [NAD(P)+] (344 aa).

Residues Ser-23, Trp-24, Arg-44, and Lys-118 each coordinate NADPH. Sn-glycerol 3-phosphate contacts are provided by Lys-118, Gly-147, and Thr-149. Residue Ala-151 participates in NADPH binding. Lys-202, Asp-255, Ser-265, Arg-266, and Asn-267 together coordinate sn-glycerol 3-phosphate. The active-site Proton acceptor is Lys-202. Arg-266 is a binding site for NADPH. Glu-292 contacts NADPH.

Belongs to the NAD-dependent glycerol-3-phosphate dehydrogenase family.

The protein localises to the cytoplasm. It catalyses the reaction sn-glycerol 3-phosphate + NAD(+) = dihydroxyacetone phosphate + NADH + H(+). It carries out the reaction sn-glycerol 3-phosphate + NADP(+) = dihydroxyacetone phosphate + NADPH + H(+). It functions in the pathway membrane lipid metabolism; glycerophospholipid metabolism. Its function is as follows. Catalyzes the reduction of the glycolytic intermediate dihydroxyacetone phosphate (DHAP) to sn-glycerol 3-phosphate (G3P), the key precursor for phospholipid synthesis. This is Glycerol-3-phosphate dehydrogenase [NAD(P)+] from Nitrosococcus oceani (strain ATCC 19707 / BCRC 17464 / JCM 30415 / NCIMB 11848 / C-107).